A 307-amino-acid chain; its full sequence is Transcription initiation factor IIB (307 aa).

2 consecutive repeat copies span residues 123 to 206 (NELE…LREL) and 217 to 298 (DYVT…ELTQ).

This sequence belongs to the TFIIB family.

Stabilizes TBP binding to an archaeal box-A promoter. Also responsible for recruiting RNA polymerase II to the pre-initiation complex (DNA-TBP-TFIIB). The protein is Transcription initiation factor IIB of Sulfolobus acidocaldarius (strain ATCC 33909 / DSM 639 / JCM 8929 / NBRC 15157 / NCIMB 11770).